Consider the following 385-residue polypeptide: Tetraacyldisaccharide 4'-kinase (385 aa).

60–67 is a binding site for ATP; it reads TVGGSGKT.

The protein belongs to the LpxK family.

The enzyme catalyses a lipid A disaccharide + ATP = a lipid IVA + ADP + H(+). The protein operates within glycolipid biosynthesis; lipid IV(A) biosynthesis; lipid IV(A) from (3R)-3-hydroxytetradecanoyl-[acyl-carrier-protein] and UDP-N-acetyl-alpha-D-glucosamine: step 6/6. Its function is as follows. Transfers the gamma-phosphate of ATP to the 4'-position of a tetraacyldisaccharide 1-phosphate intermediate (termed DS-1-P) to form tetraacyldisaccharide 1,4'-bis-phosphate (lipid IVA). The sequence is that of Tetraacyldisaccharide 4'-kinase from Psychrobacter arcticus (strain DSM 17307 / VKM B-2377 / 273-4).